The chain runs to 595 residues: Sialic acid-binding Ig-like lectin 12 (595 aa).

The first 18 residues, 1 to 18 (MLLLLLLLPPLLCGRVGA), serve as a signal peptide directing secretion. 2 Ig-like V-type domains span residues 19–142 (KEQK…VNVT) and 143–269 (ASQD…VHVT). Topologically, residues 19 to 481 (KEQKDYLLTM…RPISGVTLGA (463 aa)) are extracellular. Cysteine 44 and cysteine 104 form a disulfide bridge. N-linked (GlcNAc...) asparagine glycans are attached at residues asparagine 140, asparagine 179, asparagine 230, and asparagine 290. Disulfide bonds link cysteine 166–cysteine 299, cysteine 171–cysteine 231, and cysteine 293–cysteine 342. Residues 275 to 358 (PTFSIPGTLE…AGVTMTRAVR (84 aa)) enclose the Ig-like C2-type 1 domain. N-linked (GlcNAc...) asparagine glycans are attached at residues asparagine 360, asparagine 367, and asparagine 385. The Ig-like C2-type 2 domain maps to 365 to 462 (PQNLTMTVFQ…GSQHISLSLS (98 aa)). A disulfide bridge connects residues cysteine 401 and cysteine 446. The chain crosses the membrane as a helical span at residues 482–502 (FGGAGATALVFLYFCIIFVVV). Residues 503 to 595 (RSCRKKSARP…YEYSEINIPK (93 aa)) are Cytoplasmic-facing. The disordered stretch occupies residues 512 to 560 (PAVGVGDTGMEDANAVRGSASQGPLIESPADDSPPHHAPPALATPSPEE). Residues 563–568 (IQYASL) carry the ITIM motif motif. Residues tyrosine 565 and tyrosine 588 each carry the phosphotyrosine modification. The short motif at 586-591 (YEYSEI) is the SLAM-like motif element.

Belongs to the immunoglobulin superfamily. SIGLEC (sialic acid binding Ig-like lectin) family. Isoform Short is highly expressed in spleen, small intestine and adrenal gland; it is lower expressed in thyroid, placenta, brain, stomach, bone marrow, spinal cord and breast. Isoform Long is highly expressed in spleen, small intestine and bone marrow; it is lower expressed in thyroid, placenta, thymus, trachea, stomach, lung, adrenal gland, fetal brain and testis.

The protein localises to the membrane. In terms of biological role, putative adhesion molecule that mediates sialic-acid dependent binding to cells. The sialic acid recognition site may be masked by cis interactions with sialic acids on the same cell surface. In Homo sapiens (Human), this protein is Sialic acid-binding Ig-like lectin 12 (SIGLEC12).